We begin with the raw amino-acid sequence, 367 residues long: GMP synthase [glutamine-hydrolyzing] subunit B (367 aa).

Residues 2–190 (FDPASFVKEI…LKLPKEISER (189 aa)) form the GMPS ATP-PPase domain. 29–35 (SGGVDST) serves as a coordination point for ATP.

As to quaternary structure, heterodimer composed of a glutamine amidotransferase subunit (A) and a GMP-binding subunit (B).

The catalysed reaction is XMP + L-glutamine + ATP + H2O = GMP + L-glutamate + AMP + diphosphate + 2 H(+). The protein operates within purine metabolism; GMP biosynthesis; GMP from XMP (L-Gln route): step 1/1. Catalyzes the synthesis of GMP from XMP. The protein is GMP synthase [glutamine-hydrolyzing] subunit B of Saccharolobus islandicus (strain M.16.27) (Sulfolobus islandicus).